Here is a 60-residue protein sequence, read N- to C-terminus: MAVQQNKKSRSARDMRRSHDALEASTLSVEKTTGEVHLRHHVSPEGVYRGRKVIDKGADE.

The disordered stretch occupies residues 1–44 (MAVQQNKKSRSARDMRRSHDALEASTLSVEKTTGEVHLRHHVSP). Positions 11–22 (SARDMRRSHDAL) are enriched in basic and acidic residues.

The protein belongs to the bacterial ribosomal protein bL32 family.

In Pseudomonas fluorescens (strain SBW25), this protein is Large ribosomal subunit protein bL32.